Here is a 260-residue protein sequence, read N- to C-terminus: Carbonic anhydrase 2 (260 aa).

Serine 2 bears the N-acetylserine mark. Serine 2 carries the post-translational modification Phosphoserine. One can recognise an Alpha-carbonic anhydrase domain in the interval 3-259; the sequence is HHWGYSKSNG…LKNRKIKASF (257 aa). The tract at residues 16–39 is disordered; sequence WHKEFPIANGDRQSPVDIDTGTAQ. Histidine 64 functions as the Proton donor/acceptor in the catalytic mechanism. Phosphoserine is present on serine 87. Residues histidine 94, histidine 96, and histidine 119 each contribute to the Zn(2+) site. Position 165 is a phosphoserine (serine 165). Residue 198–199 participates in substrate binding; the sequence is TT. A Phosphoserine modification is found at serine 232.

The protein belongs to the alpha-carbonic anhydrase family. As to quaternary structure, interacts with SLC4A4 and SLC26A6. Interaction with SLC4A7 regulates SLC4A7 transporter activity. Requires Zn(2+) as cofactor.

Its subcellular location is the cytoplasm. The protein localises to the cell membrane. It carries out the reaction hydrogencarbonate + H(+) = CO2 + H2O. The enzyme catalyses urea = cyanamide + H2O. With respect to regulation, inhibited by acetazolamide. Its function is as follows. Catalyzes the reversible hydration of carbon dioxide. Can also hydrate cyanamide to urea. Involved in the regulation of fluid secretion into the anterior chamber of the eye. Essential for bone resorption and osteoclast differentiation. Contributes to intracellular pH regulation in the duodenal upper villous epithelium during proton-coupled peptide absorption. Stimulates the chloride-bicarbonate exchange activity of SLC26A6. This is Carbonic anhydrase 2 (Ca2) from Rattus norvegicus (Rat).